Reading from the N-terminus, the 963-residue chain is Vacuolar membrane protease (963 aa).

The Cytoplasmic portion of the chain corresponds to 1 to 15; it reads MVSSRRGFNPIAFTP. A helical membrane pass occupies residues 16–36; the sequence is WPVTILTSLVYLALIIPIIVV. The Vacuolar portion of the chain corresponds to 37 to 391; that stretch reads HHLVPPAPKQ…FQLNTLFGLS (355 aa). Residues Asn-111 and Asn-114 are each glycosylated (N-linked (GlcNAc...) asparagine). His-170 and Asp-182 together coordinate Zn(2+). The active-site Proton acceptor is the Glu-216. Residues Glu-217, Glu-242, and His-315 each contribute to the Zn(2+) site. Residues 392–412 form a helical membrane-spanning segment; sequence VALLVVAPLLLILTSVALFAV. Topologically, residues 413 to 441 are cytoplasmic; it reads DKMYMFSMYTYLSESGGQVSLYGLRGMFR. Residues 442–462 traverse the membrane as a helical segment; the sequence is FPLILGISTALTVALAFLIMK. Residues 463–473 are Vacuolar-facing; the sequence is VNPFIIYSSPY. Residues 474-494 form a helical membrane-spanning segment; the sequence is AVWSMMLSTCMFFAWFISCVA. Over 495–504 the chain is Cytoplasmic; that stretch reads DFARPSALHR. Residues 505-525 traverse the membrane as a helical segment; that stretch reads AYAFSWMFGILWVFLVIATVY. Residues 526–535 lie on the Vacuolar side of the membrane; sequence QRQHGIASSY. The chain crosses the membrane as a helical span at residues 536-556; sequence FIVFYFAGVSVATWISYLELF. At 557–668 the chain is on the cytoplasmic side; the sequence is GLSTTQDYAR…WSIYLVSSAW (112 aa). The disordered stretch occupies residues 569–618; that stretch reads SRLSDRTPSSDSHLLAPSADELPSSGSVAGRDFNPEDVEDEEPTESTSLL. The span at 603–612 shows a compositional bias: acidic residues; that stretch reads PEDVEDEEPT. A helical transmembrane segment spans residues 669-689; that stretch reads ILQFLLVAPIVLILLGQLGLF. Topologically, residues 690 to 705 are vacuolar; it reads LTSATYQIGADGGSQF. The helical transmembrane segment at 706–726 threads the bilayer; sequence IIYIGIAVLSVLILLPLFPFI. Residues 727–732 lie on the Cytoplasmic side of the membrane; the sequence is HRFTYH. The helical transmembrane segment at 733 to 753 threads the bilayer; the sequence is IPTFMLFVLIGTLVYNLTAFP. At 754–963 the chain is on the vacuolar side; it reads FSHNSRLKVA…LVEGSYSFKL (210 aa). N-linked (GlcNAc...) asparagine glycosylation occurs at Asn-835.

This sequence belongs to the peptidase M28 family. The cofactor is Zn(2+).

It localises to the vacuole membrane. Functionally, may be involved in vacuolar sorting and osmoregulation. This is Vacuolar membrane protease from Arthroderma gypseum (strain ATCC MYA-4604 / CBS 118893) (Microsporum gypseum).